A 161-amino-acid polypeptide reads, in one-letter code: Regulator of ribonuclease activity A (161 aa).

Belongs to the RraA family. In terms of assembly, homotrimer. Binds to both RNA-binding sites in the C-terminal region of Rne and to RhlB.

It localises to the cytoplasm. Functionally, globally modulates RNA abundance by binding to RNase E (Rne) and regulating its endonucleolytic activity. Can modulate Rne action in a substrate-dependent manner by altering the composition of the degradosome. Modulates RNA-binding and helicase activities of the degradosome. In Tolumonas auensis (strain DSM 9187 / NBRC 110442 / TA 4), this protein is Regulator of ribonuclease activity A.